A 137-amino-acid polypeptide reads, in one-letter code: NADH-ubiquinone oxidoreductase chain 3 (137 aa).

The next 3 membrane-spanning stretches (helical) occupy residues 6–26, 57–77, and 86–106; these read LFIL…LIFA, FFIF…TFPF, and IYGL…FVYE.

Belongs to the complex I subunit 3 family.

The protein resides in the mitochondrion membrane. The enzyme catalyses a ubiquinone + NADH + 5 H(+)(in) = a ubiquinol + NAD(+) + 4 H(+)(out). Functionally, core subunit of the mitochondrial membrane respiratory chain NADH dehydrogenase (Complex I) that is believed to belong to the minimal assembly required for catalysis. Complex I functions in the transfer of electrons from NADH to the respiratory chain. The immediate electron acceptor for the enzyme is believed to be ubiquinone. This Podospora anserina (strain S / ATCC MYA-4624 / DSM 980 / FGSC 10383) (Pleurage anserina) protein is NADH-ubiquinone oxidoreductase chain 3 (ND3).